A 372-amino-acid polypeptide reads, in one-letter code: BTB/POZ and TAZ domain-containing protein 4 (372 aa).

The tract at residues 14–37 (SADSSSVPIPPPLPSKSDGLKKKL) is disordered. The BTB domain occupies 60–128 (ADVVIYTDNG…LYSSCYEKEE (69 aa)). Residues 238 to 330 (RIYSQLYEAM…SDQCRVPLCR (93 aa)) form a TAZ-type zinc finger. A caM-binding region spans residues 341 to 364 (KKDESRWKLLVKNVLGSKKIGGSP).

Interacts with GTE11/BET10 through the BTB domain. As to expression, preferentially expressed in leaves, stems and flowers.

The protein resides in the cytoplasm. Its pathway is protein modification; protein ubiquitination. May act as a substrate-specific adapter of an E3 ubiquitin-protein ligase complex (CUL3-RBX1-BTB) which mediates the ubiquitination and subsequent proteasomal degradation of target proteins. This is BTB/POZ and TAZ domain-containing protein 4 (BT4) from Arabidopsis thaliana (Mouse-ear cress).